A 442-amino-acid polypeptide reads, in one-letter code: 3-isopropylmalate dehydratase large subunit (442 aa).

Residues C347, C407, and C410 each coordinate [4Fe-4S] cluster.

This sequence belongs to the aconitase/IPM isomerase family. LeuC type 1 subfamily. In terms of assembly, heterodimer of LeuC and LeuD. [4Fe-4S] cluster is required as a cofactor.

It catalyses the reaction (2R,3S)-3-isopropylmalate = (2S)-2-isopropylmalate. It participates in amino-acid biosynthesis; L-leucine biosynthesis; L-leucine from 3-methyl-2-oxobutanoate: step 2/4. Catalyzes the isomerization between 2-isopropylmalate and 3-isopropylmalate, via the formation of 2-isopropylmaleate. This Buchnera aphidicola subsp. Uroleucon solidaginis protein is 3-isopropylmalate dehydratase large subunit.